Consider the following 371-residue polypeptide: 4-hydroxy-3-methylbut-2-en-1-yl diphosphate synthase (flavodoxin) (371 aa).

[4Fe-4S] cluster contacts are provided by Cys268, Cys271, Cys303, and Glu310.

This sequence belongs to the IspG family. The cofactor is [4Fe-4S] cluster.

The catalysed reaction is (2E)-4-hydroxy-3-methylbut-2-enyl diphosphate + oxidized [flavodoxin] + H2O + 2 H(+) = 2-C-methyl-D-erythritol 2,4-cyclic diphosphate + reduced [flavodoxin]. Its pathway is isoprenoid biosynthesis; isopentenyl diphosphate biosynthesis via DXP pathway; isopentenyl diphosphate from 1-deoxy-D-xylulose 5-phosphate: step 5/6. Its function is as follows. Converts 2C-methyl-D-erythritol 2,4-cyclodiphosphate (ME-2,4cPP) into 1-hydroxy-2-methyl-2-(E)-butenyl 4-diphosphate. In Lysinibacillus sphaericus (strain C3-41), this protein is 4-hydroxy-3-methylbut-2-en-1-yl diphosphate synthase (flavodoxin).